A 512-amino-acid chain; its full sequence is Histidine ammonia-lyase (512 aa).

Positions 145–147 form a cross-link, 5-imidazolinone (Ala-Gly); sequence ASG. At Ser146 the chain carries 2,3-didehydroalanine (Ser).

This sequence belongs to the PAL/histidase family. Contains an active site 4-methylidene-imidazol-5-one (MIO), which is formed autocatalytically by cyclization and dehydration of residues Ala-Ser-Gly.

It is found in the cytoplasm. It catalyses the reaction L-histidine = trans-urocanate + NH4(+). The protein operates within amino-acid degradation; L-histidine degradation into L-glutamate; N-formimidoyl-L-glutamate from L-histidine: step 1/3. The protein is Histidine ammonia-lyase of Pseudomonas fluorescens (strain SBW25).